A 205-amino-acid polypeptide reads, in one-letter code: Large ribosomal subunit protein uL13 (205 aa).

It belongs to the universal ribosomal protein uL13 family.

The sequence is that of Large ribosomal subunit protein uL13 (RPL13A) from Lupinus luteus (European yellow lupine).